A 273-amino-acid polypeptide reads, in one-letter code: Large ribosomal subunit protein uL2cz/uL2cy (273 aa).

Disordered regions lie at residues 1-23 (MAIH…SQVK) and 224-273 (NPVD…RRRK).

The protein belongs to the universal ribosomal protein uL2 family. In terms of assembly, part of the 50S ribosomal subunit.

The protein localises to the plastid. Its subcellular location is the chloroplast. In Amborella trichopoda, this protein is Large ribosomal subunit protein uL2cz/uL2cy (rpl2-A).